The sequence spans 147 residues: Bis(5'-nucleosyl)-tetraphosphatase [asymmetrical] (147 aa).

The residue at position 2 (A2) is an N-acetylalanine. A Nudix hydrolase domain is found at 2–139; sequence ALRACGLIIF…EMKATLQEGH (138 aa). Residues 43–64 carry the Nudix box motif; it reads GHVDPGENDLETALRETREETG.

The protein belongs to the Nudix hydrolase family. A divalent metal cation is required as a cofactor.

It catalyses the reaction P(1),P(4)-bis(5'-guanosyl) tetraphosphate + H2O = GMP + GTP + 2 H(+). It carries out the reaction a 5'-end CoA-ribonucleoside in mRNA + H2O = a 5'-end phospho-adenosine-phospho-ribonucleoside in mRNA + (R)-4'-phosphopantetheine + 2 H(+). The catalysed reaction is a 5'-end FAD-phospho-ribonucleoside in mRNA + H2O = a 5'-end phospho-adenosine-phospho-ribonucleoside in mRNA + FMN + 2 H(+). Functionally, catalyzes the asymmetric hydrolysis of diadenosine 5',5'''-P1,P4-tetraphosphate (Ap4A) to yield AMP and ATP. Exhibits decapping activity towards FAD-capped RNAs and dpCoA-capped RNAs in vitro. This is Bis(5'-nucleosyl)-tetraphosphatase [asymmetrical] (Nudt2) from Mus musculus (Mouse).